The chain runs to 500 residues: Nucleolar and spindle-associated protein 1 (500 aa).

Disordered regions lie at residues 48–204, 241–299, 319–353, and 365–500; these read KNET…NFKK, TKKS…ASKS, VRFS…PESE, and ELLP…VPVK. Residues 82 to 92 show a composition bias toward basic residues; it reads THRRGRGRKPI. Over residues 113–127 the composition is skewed to polar residues; the sequence is NMASSIDRTQQQNCT. Low complexity predominate over residues 264 to 274; sequence SRLSLLSPLPR. Polar residues predominate over residues 276-298; it reads TGASPSRTPMSQRRSCRSSTASK. The segment covering 323-332 has biased composition (basic and acidic residues); the sequence is EATKDNEHKR. Over residues 380 to 392 the composition is skewed to polar residues; sequence ITLNTTTQPSPAT. Over residues 442–451 the composition is skewed to basic and acidic residues; that stretch reads PWGESKENKP. Positions 452 to 469 are enriched in polar residues; that stretch reads DPNSNVSVLKNNYKQPHL.

This sequence belongs to the NUSAP family. As to quaternary structure, interacts with DNA, microtubules, ipo7, kpna2 and kpnb1. Microtubule stabilization is inhibited by ipo7 and kpna2, while microtubule bundling is inhibited by kpnb1. Active GTP-bound ran causes dissociation of ipo7 and kpnb1.

It localises to the cytoplasm. Its subcellular location is the nucleus. It is found in the cytoskeleton. The protein localises to the spindle. In terms of biological role, microtubule-associated protein with the capacity to bundle and stabilize microtubules. May associate with chromosomes and promote the organization of meiotic or mitotic spindle microtubules around them. The sequence is that of Nucleolar and spindle-associated protein 1 (nusap1) from Xenopus tropicalis (Western clawed frog).